Here is a 542-residue protein sequence, read N- to C-terminus: Importin subunit alpha-1 (542 aa).

The tract at residues M1–R29 is disordered. The IBB domain occupies M1–A60. 8 ARM repeats span residues I114–Q155, T156–C197, R198–Q240, P241–K282, I283–Q324, T325–Q366, I367–R408, and P409–D453.

The protein belongs to the importin alpha family. Interacts with pap1.

The protein localises to the nucleus. Binds specifically and directly to substrates containing either a simple or bipartite NLS motif. Promotes docking of import substrates to the nuclear envelope. Seems to act as a cytosolic receptor for both simple and bipartite NLS motifs. Has an essential role in mitotic chromosome condensation. Involved in nuclear protein import. Required for efficient nuclear import of both an SV40 nuclear localization signal-containing reporter protein and the pap1 component of the stress response MAP kinase pathway. Required for proper mitotic progression. In Schizosaccharomyces pombe (strain 972 / ATCC 24843) (Fission yeast), this protein is Importin subunit alpha-1 (cut15).